Consider the following 150-residue polypeptide: 6,7-dimethyl-8-ribityllumazine synthase (150 aa).

5-amino-6-(D-ribitylamino)uracil contacts are provided by residues Phe-11, 43-45, and 67-69; these read TYE and AVI. (2S)-2-hydroxy-3-oxobutyl phosphate is bound at residue 72-73; it reads AT. The Proton donor role is filled by His-75. Leu-100 contacts 5-amino-6-(D-ribitylamino)uracil. Arg-115 contributes to the (2S)-2-hydroxy-3-oxobutyl phosphate binding site.

This sequence belongs to the DMRL synthase family.

The enzyme catalyses (2S)-2-hydroxy-3-oxobutyl phosphate + 5-amino-6-(D-ribitylamino)uracil = 6,7-dimethyl-8-(1-D-ribityl)lumazine + phosphate + 2 H2O + H(+). The protein operates within cofactor biosynthesis; riboflavin biosynthesis; riboflavin from 2-hydroxy-3-oxobutyl phosphate and 5-amino-6-(D-ribitylamino)uracil: step 1/2. Functionally, catalyzes the formation of 6,7-dimethyl-8-ribityllumazine by condensation of 5-amino-6-(D-ribitylamino)uracil with 3,4-dihydroxy-2-butanone 4-phosphate. This is the penultimate step in the biosynthesis of riboflavin. The polypeptide is 6,7-dimethyl-8-ribityllumazine synthase (Staphylothermus marinus (strain ATCC 43588 / DSM 3639 / JCM 9404 / F1)).